The chain runs to 465 residues: Serine/threonine-protein kinase 38 (465 aa).

Ala2 is modified (N-acetylalanine). An interaction with S100B region spans residues 62 to 87 (KRLRRSAHARKETEFLRLKRTRLGLE). Residue Thr74 is modified to Phosphothreonine. The Protein kinase domain occupies 89-382 (FESLKVIGRG…VEEIKSNSFF (294 aa)). ATP-binding positions include 95–103 (IGRGAFGEV) and Lys118. Residue Asp212 is the Proton acceptor of the active site. Residue Ser264 is modified to Phosphoserine. A Phosphoserine; by autocatalysis modification is found at Ser281. Residues 306 to 311 (WSLGVI) carry the UFM1-interacting motif (UFIM) motif. The AGC-kinase C-terminal domain occupies 383–455 (EGVDWEHIRE…KRFEGLTARG (73 aa)). Thr444 bears the Phosphothreonine; by STK24/MST3 mark.

The protein belongs to the protein kinase superfamily. AGC Ser/Thr protein kinase family. Homodimeric S100B binds two molecules of STK38. Interacts with MOB1 and MOB2. Interacts with MAP3K1 and MAP3K2 (via the kinase catalytic domain). Forms a tripartite complex with MOBKL1B and STK3/MST2. Interacts with MICAL1; leading to inhibit the protein kinase activity by antagonizing activation by MST1/STK4. Requires Mg(2+) as cofactor. ISGylated. Post-translationally, phosphorylated by STK3/MST2 and this is enhanced by MOBKL1B. As to expression, ubiquitously expressed with highest levels observed in peripheral blood leukocytes.

It localises to the nucleus. The protein resides in the cytoplasm. Its subcellular location is the chromosome. The catalysed reaction is L-seryl-[protein] + ATP = O-phospho-L-seryl-[protein] + ADP + H(+). It catalyses the reaction L-threonyl-[protein] + ATP = O-phospho-L-threonyl-[protein] + ADP + H(+). With respect to regulation, activated by binding of S100B which releases autoinhibitory N-lobe interactions, enabling ATP to bind and the autophosphorylation of Ser-281. Thr-444 then undergoes calcium-dependent phosphorylation by STK24/MST3. Interactions between phosphorylated Thr-444 and the N-lobe promote additional structural changes that complete the activation of the kinase. Autoinhibition is also released by the binding of MOB1/MOBKL1A and MOB2/HCCA2 to the N-terminal of STK38. Functionally, serine/threonine-protein kinase that acts as a negative regulator of MAP3K1/2 signaling. Converts MAP3K2 from its phosphorylated form to its non-phosphorylated form and inhibits autophosphorylation of MAP3K2. Acts as an ufmylation 'reader' in a kinase-independent manner: specifically recognizes and binds mono-ufmylated histone H4 in response to DNA damage, promoting the recruitment of SUV39H1 to the double-strand breaks, resulting in ATM activation. The polypeptide is Serine/threonine-protein kinase 38 (Homo sapiens (Human)).